The sequence spans 520 residues: Cytochrome P450 734A1 (520 aa).

The chain crosses the membrane as a helical span at residues 13 to 33 (VLVLSVILSLVIVKGMSLLWW). C463 provides a ligand contact to heme.

The protein belongs to the cytochrome P450 family. The cofactor is heme.

The protein resides in the membrane. Its function is as follows. Cytochrome P450 involved in brassinosteroids (BRs) inactivation and regulation of BRs homeostasis. Inactivates the BRs castasterone (CS) and brassinolide (BL) through carbon 26 hydroxylation. Acts in association with CYP72C1 to inactivate BRs and modulate photomorphogenesis. The protein is Cytochrome P450 734A1 (CYP734A1) of Arabidopsis thaliana (Mouse-ear cress).